A 241-amino-acid chain; its full sequence is MSVAKKNIKKYFLEQALTQVKVDEYLAYKFHSVGYSKVELQKTPMGTRVIIYAERSGAIIGRRGQTIKQITKVLEEWFGIPNPQVTVVKVEEPELDARVMAFRLANALQRGFHFRRAAYTTLRRIMGAGAIGAQVKVSGKLRGERARFEKYIAGKVYKSGNQVVRLTDRAIAHVLLKVGVEGVEVIISKKSEEERPDDEVRIKSPEEVNEIVQKIREEMQQTQPEAPTLEETVEQSGGETQ.

The KH type-2 domain occupies 22-91 (VDEYLAYKFH…NPQVTVVKVE (70 aa)). The tract at residues 218-241 (EMQQTQPEAPTLEETVEQSGGETQ) is disordered.

Belongs to the universal ribosomal protein uS3 family. As to quaternary structure, part of the 30S ribosomal subunit.

Functionally, binds the lower part of the 30S subunit head. This chain is Small ribosomal subunit protein uS3, found in Ignicoccus hospitalis (strain KIN4/I / DSM 18386 / JCM 14125).